The following is a 265-amino-acid chain: tRNA pseudouridine synthase A (265 aa).

The active-site Nucleophile is the aspartate 52. Tyrosine 110 provides a ligand contact to substrate. The interval phenylalanine 244 to glycine 265 is disordered.

Belongs to the tRNA pseudouridine synthase TruA family. Homodimer.

The catalysed reaction is uridine(38/39/40) in tRNA = pseudouridine(38/39/40) in tRNA. In terms of biological role, formation of pseudouridine at positions 38, 39 and 40 in the anticodon stem and loop of transfer RNAs. This Myxococcus xanthus protein is tRNA pseudouridine synthase A.